A 170-amino-acid polypeptide reads, in one-letter code: MAAVPKRPSQQQELFWKTKTLEQMSAAEWESLCDGCARCCLEKLECEDTGRIYFTHIGCKMLDAEACGCKDYANRSKKVPDCVRLTPANVRTLSWLPSSCAYRLVAEGRDLYWWHPLVSGDPDTVHEAGVSVRGRVEGLEGEVSDAELEDHIVSWPTLLPKRAKLKKRPA.

This sequence belongs to the UPF0260 family.

This is UPF0260 protein RPE_1881 from Rhodopseudomonas palustris (strain BisA53).